The following is a 294-amino-acid chain: MPHTQITLDCAQSQVPRVEALLEALGALAITLSEPDDEEILEPGPGEQRLWSHLRLTALFDAATVDPLRLQARVAEVLGAPPRGWRVERLVDRAWERAWMDDFHPMRFGDRLWVVPWGQTPPAAEAVNLRLDPGLAFGTGTHPTTALCLRWLDGLPLQADTRLVDYGCGSGILAVAGCLLGAGHCTAVDNDPQARQATADNARRNGVGERIRVQGPGPLPRAGADVLVANILARVLVAMAGELSPSVRPGGRIALSGILRGQVDQVRACYSSWFEMERPEYQGDWALLAGTRRG.

4 residues coordinate S-adenosyl-L-methionine: Thr145, Gly167, Asp189, and Asn230.

This sequence belongs to the methyltransferase superfamily. PrmA family.

It localises to the cytoplasm. The catalysed reaction is L-lysyl-[protein] + 3 S-adenosyl-L-methionine = N(6),N(6),N(6)-trimethyl-L-lysyl-[protein] + 3 S-adenosyl-L-homocysteine + 3 H(+). In terms of biological role, methylates ribosomal protein L11. The protein is Ribosomal protein L11 methyltransferase of Alkalilimnicola ehrlichii (strain ATCC BAA-1101 / DSM 17681 / MLHE-1).